A 48-amino-acid polypeptide reads, in one-letter code: DNA-directed RNA polymerase subunit Rpo12 (48 aa).

Residues Cys-9, Cys-26, and Cys-29 each coordinate Zn(2+).

This sequence belongs to the archaeal Rpo12/eukaryotic RPC10 RNA polymerase subunit family. In terms of assembly, part of the RNA polymerase complex. It depends on Zn(2+) as a cofactor.

The protein resides in the cytoplasm. The enzyme catalyses RNA(n) + a ribonucleoside 5'-triphosphate = RNA(n+1) + diphosphate. In terms of biological role, DNA-dependent RNA polymerase (RNAP) catalyzes the transcription of DNA into RNA using the four ribonucleoside triphosphates as substrates. This chain is DNA-directed RNA polymerase subunit Rpo12, found in Saccharolobus islandicus (strain Y.N.15.51 / Yellowstone #2) (Sulfolobus islandicus).